The chain runs to 491 residues: Rab5 GDP/GTP exchange factor (491 aa).

An interaction with ubiquitinated proteins region spans residues 1–74 (MSLKSERRGI…EEEAFASSQS (74 aa)). The A20-type zinc-finger motif lies at 13 to 47 (DQSDLLCKKGCGYYGNPAWQGFCSKCWREEYHKAR). The Zn(2+) site is built by C19, C23, C35, and C38. Residues 66–85 (EEAFASSQSSQGAQSLTFSK) are disordered. Low complexity predominate over residues 69 to 84 (FASSQSSQGAQSLTFS). Phosphoserine is present on residues S124 and S132. 2 positions are modified to N6-acetyllysine: K151 and K170. Positions 232–375 (EKKDLAIQKR…IEKLDAQSLN (144 aa)) constitute a VPS9 domain. Phosphoserine occurs at positions 373, 377, 390, and 400. Residues 462–491 (PPNQPLAAIDSENVENDKLPPPLQPQVYAG) are disordered.

Interacts with RGS14; the interaction is GTP-dependent. Heterodimer with RABEP1. The heterodimer binds RAB4A and RAB5A that have been activated by GTP-binding. Interacts with RAB21, and with 100-fold lower affinity also with RAB22. Binds TSC2, GGA1, GGA2, GGA3, AP1G1 and AP1G2. Interacts with ubiquitinated EGFR. In terms of processing, monoubiquitinated.

The protein resides in the cytoplasm. The protein localises to the early endosome. Its subcellular location is the recycling endosome. Its function is as follows. Rab effector protein acting as linker between gamma-adaptin, RAB4A or RAB5A. Involved in endocytic membrane fusion and membrane trafficking of recycling endosomes. Stimulates nucleotide exchange on RAB5A. Can act as a ubiquitin ligase. In Homo sapiens (Human), this protein is Rab5 GDP/GTP exchange factor (RABGEF1).